We begin with the raw amino-acid sequence, 216 residues long: Probable transaldolase (216 aa).

K85 functions as the Schiff-base intermediate with substrate in the catalytic mechanism.

Belongs to the transaldolase family. Type 3B subfamily.

It is found in the cytoplasm. It carries out the reaction D-sedoheptulose 7-phosphate + D-glyceraldehyde 3-phosphate = D-erythrose 4-phosphate + beta-D-fructose 6-phosphate. Its pathway is carbohydrate degradation; pentose phosphate pathway; D-glyceraldehyde 3-phosphate and beta-D-fructose 6-phosphate from D-ribose 5-phosphate and D-xylulose 5-phosphate (non-oxidative stage): step 2/3. Its function is as follows. Transaldolase is important for the balance of metabolites in the pentose-phosphate pathway. This Dehalococcoides mccartyi (strain ATCC BAA-2266 / KCTC 15142 / 195) (Dehalococcoides ethenogenes (strain 195)) protein is Probable transaldolase.